The following is a 460-amino-acid chain: GTPase Der (460 aa).

EngA-type G domains follow at residues 21-187 (PRVV…FSVD) and 198-373 (VRLA…AQLN). GTP contacts are provided by residues 27–34 (GRPNVGKS), 74–78 (DTSGF), 141–144 (NKTE), 204–211 (GKPNTGKS), 251–255 (DTAGI), and 316–319 (NKWD). Positions 374–457 (TKVETSALNT…PVKLTIRKNC (84 aa)) constitute a KH-like domain.

Belongs to the TRAFAC class TrmE-Era-EngA-EngB-Septin-like GTPase superfamily. EngA (Der) GTPase family. In terms of assembly, associates with the 50S ribosomal subunit.

In terms of biological role, GTPase that plays an essential role in the late steps of ribosome biogenesis. This Treponema pallidum subsp. pallidum (strain SS14) protein is GTPase Der.